Consider the following 438-residue polypeptide: Putative B3 domain-containing protein Os04g0676650 (438 aa).

Low complexity predominate over residues 1-11; the sequence is MADARGSSSSS. Disordered stretches follow at residues 1-30 and 225-285; these read MADARGSSSSSGDGGGGEGKGGAGHGDFVG and SSSH…MNQN. Gly residues predominate over residues 12–30; sequence GDGGGGEGKGGAGHGDFVG. Over residues 258–269 the composition is skewed to basic and acidic residues; that stretch reads RRSDMESEKNDD. Positions 272-285 are enriched in polar residues; that stretch reads DQTPVSEPPSMNQN. Residues 302-404 constitute a DNA-binding region (TF-B3); sequence LRKELTNSDV…KFVVRGEKAI (103 aa).

The protein resides in the nucleus. In Oryza sativa subsp. japonica (Rice), this protein is Putative B3 domain-containing protein Os04g0676650.